A 310-amino-acid polypeptide reads, in one-letter code: Putative HTH-type transcriptional regulatory protein SSO0942 (310 aa).

The HTH cro/C1-type domain maps to 125-180 (LKHKREEMGYSIGDVAKFLGVSRKAIYDYEKGDSDVSLEVAEKLIDLFGDDIIGDV). The H-T-H motif DNA-binding region spans 136–155 (IGDVAKFLGVSRKAIYDYEK).

In Saccharolobus solfataricus (strain ATCC 35092 / DSM 1617 / JCM 11322 / P2) (Sulfolobus solfataricus), this protein is Putative HTH-type transcriptional regulatory protein SSO0942.